Reading from the N-terminus, the 368-residue chain is Protein pxr1 (368 aa).

Disordered regions lie at residues 1–28 (MGLAAPKNKIKLSHDPNNTRWSGNTDSF) and 161–339 (KEKA…PMGI). A compositionally biased stretch (polar residues) spans 15–27 (DPNNTRWSGNTDS). The 55-residue stretch at 25–79 (TDSFGHRMMKSQGWTPGEYLGAKDAAHAEFHTEANASHIRVVIKDNTLGLGAKIG) folds into the G-patch domain. Residues 168–182 (SSEESDSSSDEEEEK) are compositionally biased toward acidic residues. 4 stretches are compositionally biased toward basic residues: residues 209–226 (SKKSKKEKKEKKEKKSKK), 242–254 (KSKKSKKDRKSKS), 271–283 (KARKKEKKEKKRK), and 301–312 (SSKKSKKDKHKS). A compositionally biased stretch (low complexity) spans 313–324 (PSTSKTSTKEST). Polar residues predominate over residues 325–334 (PIVSESSGRS).

This sequence belongs to the PINX1 family.

The protein localises to the nucleus. Its subcellular location is the nucleolus. Functionally, involved in rRNA-processing at A0, A1 and A2 sites and negatively regulates telomerase. The protein is Protein pxr1 (pxr1) of Botryotinia fuckeliana (strain B05.10) (Noble rot fungus).